The following is a 91-amino-acid chain: ATP synthase subunit c (91 aa).

2 helical membrane-spanning segments follow: residues 4–24 (LTMC…GTGI) and 53–73 (IGLA…LIIL).

Belongs to the ATPase C chain family. In terms of assembly, F-type ATPases have 2 components, F(1) - the catalytic core - and F(0) - the membrane proton channel. F(1) has five subunits: alpha(3), beta(3), gamma(1), delta(1), epsilon(1). F(0) has three main subunits: a(1), b(2) and c(10-14). The alpha and beta chains form an alternating ring which encloses part of the gamma chain. F(1) is attached to F(0) by a central stalk formed by the gamma and epsilon chains, while a peripheral stalk is formed by the delta and b chains.

The protein resides in the cell inner membrane. F(1)F(0) ATP synthase produces ATP from ADP in the presence of a proton or sodium gradient. F-type ATPases consist of two structural domains, F(1) containing the extramembraneous catalytic core and F(0) containing the membrane proton channel, linked together by a central stalk and a peripheral stalk. During catalysis, ATP synthesis in the catalytic domain of F(1) is coupled via a rotary mechanism of the central stalk subunits to proton translocation. Its function is as follows. Key component of the F(0) channel; it plays a direct role in translocation across the membrane. A homomeric c-ring of between 10-14 subunits forms the central stalk rotor element with the F(1) delta and epsilon subunits. The chain is ATP synthase subunit c from Geobacter metallireducens (strain ATCC 53774 / DSM 7210 / GS-15).